Reading from the N-terminus, the 511-residue chain is Chromosomal replication initiator protein DnaA (511 aa).

The interval 1-90 is domain I, interacts with DnaA modulators; it reads MSVELWQQCV…RRSSAPRAAP (90 aa). Residues 91 to 174 form a domain II region; it reads NAPVSAAMAA…QVEGALKHTS (84 aa). The segment at 125 to 161 is disordered; that stretch reads TAEPAQASDMAEASSRDSYDSMADSAPAPVAPGRTEQ. The segment at 175–391 is domain III, AAA+ region; it reads YLNRTFTFET…GALKRVIAHS (217 aa). Positions 219, 221, 222, and 223 each coordinate ATP. Residues 392–511 are domain IV, binds dsDNA; the sequence is HFMGRDITIE…YKNLLRTLTT (120 aa).

Belongs to the DnaA family. Oligomerizes as a right-handed, spiral filament on DNA at oriC.

Its subcellular location is the cytoplasm. Functionally, plays an essential role in the initiation and regulation of chromosomal replication. ATP-DnaA binds to the origin of replication (oriC) to initiate formation of the DNA replication initiation complex once per cell cycle. Binds the DnaA box (a 9 base pair repeat at the origin) and separates the double-stranded (ds)DNA. Forms a right-handed helical filament on oriC DNA; dsDNA binds to the exterior of the filament while single-stranded (ss)DNA is stabiized in the filament's interior. The ATP-DnaA-oriC complex binds and stabilizes one strand of the AT-rich DNA unwinding element (DUE), permitting loading of DNA polymerase. After initiation quickly degrades to an ADP-DnaA complex that is not apt for DNA replication. Binds acidic phospholipids. This chain is Chromosomal replication initiator protein DnaA, found in Pseudomonas putida (strain W619).